Here is a 259-residue protein sequence, read N- to C-terminus: MELKIARAIIKHGLEDLYEYSEVDVAVVGAGPAGLTAARYLAERGHRVVVYERRFSFGGGIGPGGNMIPKIVVQEEAVPVLKDFRVRYRPVGDGLYTVDPAELIAKLAAGAIDAGAKIILGVHVDDVIFRGDPPRVAGLLWVWTPIQMSGSHVDPLYTQARAVLDATGHDAEVISIASRKVPELGVEVRGEKSAWAEVSEKLVVEHTGRVAPGLYAAGMAVCAVHGLPRMGPIFGGMLLSGRRAAEIIHKDLVEYAVRA.

Residues Ala-33, 52–53 (ER), Gly-60, Val-124, and 152–154 (HVD) each bind NAD(+). Residues Asp-154 and His-169 each contribute to the Fe cation site. Met-219 provides a ligand contact to NAD(+). Arg-229 is a binding site for glycine.

It belongs to the THI4 family. Homooctamer; tetramer of dimers. Fe(2+) serves as cofactor.

It catalyses the reaction hydrogen sulfide + glycine + NAD(+) = ADP-5-ethyl-4-methylthiazole-2-carboxylate + nicotinamide + 3 H2O + H(+). The protein operates within cofactor biosynthesis; thiamine diphosphate biosynthesis. Functionally, involved in the biosynthesis of the thiazole moiety of thiamine. Catalyzes the conversion of NAD and glycine to adenosine diphosphate 5-(2-hydroxyethyl)-4-methylthiazole-2-carboxylate (ADT), an adenylated thiazole intermediate, using free sulfide as a source of sulfur. The sequence is that of Thiamine thiazole synthase from Pyrobaculum neutrophilum (strain DSM 2338 / JCM 9278 / NBRC 100436 / V24Sta) (Thermoproteus neutrophilus).